The following is a 94-amino-acid chain: Ig kappa-B5 chain V region 2699 (94 aa).

Residues 1–23 (AFELTQTPSSVEAAVGGTVTINC) form a framework-1 region. Positions 24–34 (QASTDISSNLA) are complementarity-determining-1. The framework-2 stretch occupies residues 35-49 (WYTPKPGSPPKLLIY). Residues 50–56 (SASTLAS) are complementarity-determining-2. The tract at residues 57 to 82 (GVSSRFKGSGSGVLITLTISDLECGV) is framework-3. A region of interest (complementarity-determining-3) is located at residue Ser-83. The tract at residues 84–93 (FGGGTKVVVE) is framework-4.

The protein is Ig kappa-B5 chain V region 2699 of Oryctolagus cuniculus (Rabbit).